The primary structure comprises 481 residues: Aspartyl/glutamyl-tRNA(Asn/Gln) amidotransferase subunit B (481 aa).

It belongs to the GatB/GatE family. GatB subfamily. As to quaternary structure, heterotrimer of A, B and C subunits.

It catalyses the reaction L-glutamyl-tRNA(Gln) + L-glutamine + ATP + H2O = L-glutaminyl-tRNA(Gln) + L-glutamate + ADP + phosphate + H(+). The catalysed reaction is L-aspartyl-tRNA(Asn) + L-glutamine + ATP + H2O = L-asparaginyl-tRNA(Asn) + L-glutamate + ADP + phosphate + 2 H(+). Its function is as follows. Allows the formation of correctly charged Asn-tRNA(Asn) or Gln-tRNA(Gln) through the transamidation of misacylated Asp-tRNA(Asn) or Glu-tRNA(Gln) in organisms which lack either or both of asparaginyl-tRNA or glutaminyl-tRNA synthetases. The reaction takes place in the presence of glutamine and ATP through an activated phospho-Asp-tRNA(Asn) or phospho-Glu-tRNA(Gln). The sequence is that of Aspartyl/glutamyl-tRNA(Asn/Gln) amidotransferase subunit B from Ehrlichia ruminantium (strain Gardel).